The following is a 316-amino-acid chain: Ribose-phosphate pyrophosphokinase (316 aa).

ATP-binding positions include 39–41 (DGE) and 98–99 (RQ). Mg(2+)-binding residues include His133 and Asp172. The active site involves Lys195. Residues Arg197, Asp221, and 225-229 (DTANT) contribute to the D-ribose 5-phosphate site.

It belongs to the ribose-phosphate pyrophosphokinase family. Class I subfamily. Homohexamer. Mg(2+) serves as cofactor.

It localises to the cytoplasm. The enzyme catalyses D-ribose 5-phosphate + ATP = 5-phospho-alpha-D-ribose 1-diphosphate + AMP + H(+). The protein operates within metabolic intermediate biosynthesis; 5-phospho-alpha-D-ribose 1-diphosphate biosynthesis; 5-phospho-alpha-D-ribose 1-diphosphate from D-ribose 5-phosphate (route I): step 1/1. In terms of biological role, involved in the biosynthesis of the central metabolite phospho-alpha-D-ribosyl-1-pyrophosphate (PRPP) via the transfer of pyrophosphoryl group from ATP to 1-hydroxyl of ribose-5-phosphate (Rib-5-P). The polypeptide is Ribose-phosphate pyrophosphokinase (Nitrosomonas europaea (strain ATCC 19718 / CIP 103999 / KCTC 2705 / NBRC 14298)).